The chain runs to 339 residues: RNA 3'-terminal phosphate cyclase (339 aa).

ATP contacts are provided by residues Gln-103 and 283–287; that span reads HLADQ. Residue His-308 is the Tele-AMP-histidine intermediate of the active site.

The protein belongs to the RNA 3'-terminal cyclase family. Type 1 subfamily.

It is found in the cytoplasm. It catalyses the reaction a 3'-end 3'-phospho-ribonucleotide-RNA + ATP = a 3'-end 2',3'-cyclophospho-ribonucleotide-RNA + AMP + diphosphate. Its function is as follows. Catalyzes the conversion of 3'-phosphate to a 2',3'-cyclic phosphodiester at the end of RNA. The mechanism of action of the enzyme occurs in 3 steps: (A) adenylation of the enzyme by ATP; (B) transfer of adenylate to an RNA-N3'P to produce RNA-N3'PP5'A; (C) and attack of the adjacent 2'-hydroxyl on the 3'-phosphorus in the diester linkage to produce the cyclic end product. The biological role of this enzyme is unknown but it is likely to function in some aspects of cellular RNA processing. The protein is RNA 3'-terminal phosphate cyclase of Salmonella typhimurium (strain LT2 / SGSC1412 / ATCC 700720).